A 423-amino-acid chain; its full sequence is Site-specific recombinase Flp (423 aa).

Positions 136–422 constitute a Tyr recombinase Flp-type domain; it reads GNSHSKKMLK…DYLSSYINRR (287 aa). Y343 acts as the O-(3'-phospho-DNA)-tyrosine intermediate in catalysis.

It belongs to the 'phage' integrase family. In terms of assembly, homotetramer.

In terms of biological role, part of the plasmid amplification system, which corrects any decrease in copy number caused by a rare missegregation event. Catalyzes the recombination between the large inverted repetitions of the 2-micron plasmid during plasmid replication. This recombination event changes the direction of one of the two replication forks in the bidirectionally replicating molecule, effectively resulting in multiple rounds of replication from a single initiation event. Binds specifically to the FLP recognition target (FRT) site where it induces DNA to bend. Three types of bend exist. Type I is approximately 60 degrees and results from 1 FLP molecule binding to 1 symmetry element. Type II is &gt;144 degrees and results from FLP molecules binding to symmetry elements a and b. Type III is approximately 65 degrees and results from FLP molecules binding to symmetry elements b and c. This chain is Site-specific recombinase Flp (FLP1), found in Saccharomyces cerevisiae (strain ATCC 204508 / S288c) (Baker's yeast).